Reading from the N-terminus, the 132-residue chain is DCPSDWSPYGQYCYKFFQQKMNWADAERFCSEQAKGGHLVSFQSDGETDFVVNLVTEKIQSSDLYAWIGLRVQNKEKQCSSKWSDGSSVSYENVVGRTVKKCFALEKEQEFFVWINIYCGQQNPFVCKSPPP.

3 disulfide bridges follow: C2/C13, C30/C127, and C102/C119. Residues 9-128 enclose the C-type lectin domain; it reads YGQYCYKFFQ…CGQQNPFVCK (120 aa).

It belongs to the snaclec family. Heterodimer of subunits alpha and beta; disulfide-linked. As to expression, expressed by the venom gland.

Its subcellular location is the secreted. Functionally, thrombin and prothrombin (F2) inhibitor. The IC(50) of thrombin-induced platelet aggregation and fibrinocoagulation is 62 and 35 nM, respectively. Its inhibitory activity is at least 10-fold lower than that observed for other thrombin inhibitors. The chain is Snaclec bothroinsularin subunit alpha from Bothrops insularis (Golden lancehead).